Here is a 235-residue protein sequence, read N- to C-terminus: Pyridoxine 5'-phosphate synthase (235 aa).

Asparagine 6 is a 3-amino-2-oxopropyl phosphate binding site. 8 to 9 (DH) lines the 1-deoxy-D-xylulose 5-phosphate pocket. Residue arginine 17 participates in 3-amino-2-oxopropyl phosphate binding. Histidine 42 (proton acceptor) is an active-site residue. 1-deoxy-D-xylulose 5-phosphate contacts are provided by arginine 44 and histidine 49. The active-site Proton acceptor is the glutamate 69. Threonine 99 is a binding site for 1-deoxy-D-xylulose 5-phosphate. Residue histidine 189 is the Proton donor of the active site. 3-amino-2-oxopropyl phosphate is bound by residues glycine 190 and 211–212 (GH).

This sequence belongs to the PNP synthase family. In terms of assembly, homooctamer; tetramer of dimers.

The protein resides in the cytoplasm. The enzyme catalyses 3-amino-2-oxopropyl phosphate + 1-deoxy-D-xylulose 5-phosphate = pyridoxine 5'-phosphate + phosphate + 2 H2O + H(+). Its pathway is cofactor biosynthesis; pyridoxine 5'-phosphate biosynthesis; pyridoxine 5'-phosphate from D-erythrose 4-phosphate: step 5/5. Catalyzes the complicated ring closure reaction between the two acyclic compounds 1-deoxy-D-xylulose-5-phosphate (DXP) and 3-amino-2-oxopropyl phosphate (1-amino-acetone-3-phosphate or AAP) to form pyridoxine 5'-phosphate (PNP) and inorganic phosphate. The sequence is that of Pyridoxine 5'-phosphate synthase from Chlorobium chlorochromatii (strain CaD3).